The primary structure comprises 248 residues: NADH dehydrogenase [ubiquinone] flavoprotein 2, mitochondrial (248 aa).

Residues 1–31 (MFSLALRARASGLTAQWGRHARNLHKTAVQN) constitute a mitochondrion transit peptide. [2Fe-2S] cluster contacts are provided by C134, C139, C175, and C179. Phosphotyrosine; by SRC is present on Y192. Positions 229-248 (GLTSLTEPPKGPGFGVQAGL) are disordered.

Belongs to the complex I 24 kDa subunit family. In terms of assembly, core subunit of respiratory chain NADH dehydrogenase (Complex I) which is composed of 45 different subunits. This is a component of the flavoprotein-sulfur (FP) fragment of the enzyme. [2Fe-2S] cluster serves as cofactor.

The protein localises to the mitochondrion inner membrane. It catalyses the reaction a ubiquinone + NADH + 5 H(+)(in) = a ubiquinol + NAD(+) + 4 H(+)(out). Its function is as follows. Core subunit of the mitochondrial membrane respiratory chain NADH dehydrogenase (Complex I) which catalyzes electron transfer from NADH through the respiratory chain, using ubiquinone as an electron acceptor. Parts of the peripheral arm of the enzyme, where the electrons from NADH are accepted by flavin mononucleotide (FMN) and then passed along a chain of iron-sulfur clusters by electron tunnelling to the final acceptor ubiquinone. Contains one iron-sulfur cluster. This is NADH dehydrogenase [ubiquinone] flavoprotein 2, mitochondrial from Rattus norvegicus (Rat).